Reading from the N-terminus, the 111-residue chain is Repressed By RIM101 protein 1 (111 aa).

A signal peptide spans 1-19 (MKFSTTLLALTASIAAVMS). The segment at 71 to 90 (SGASSATGGSSAAKSGSSSG) is disordered. Serine 81 carries GPI-anchor amidated serine lipidation. Positions 82 to 111 (AAKSGSSSGAGFAPVAGAGSLAAIAGLLLL) are cleaved as a propeptide — removed in mature form.

Post-translationally, the GPI-anchor is attached to the protein in the endoplasmic reticulum and serves to target the protein to the cell surface. There, the glucosamine-inositol phospholipid moiety is cleaved off and the GPI-modified mannoprotein is covalently attached via its lipidless GPI glycan remnant to the 1,6-beta-glucan of the outer cell wall layer.

Its subcellular location is the secreted. The protein resides in the cell wall. It localises to the membrane. In terms of biological role, probable cell wall protein required for filamentation at low pH. The sequence is that of Repressed By RIM101 protein 1 (RBR1) from Candida albicans (strain SC5314 / ATCC MYA-2876) (Yeast).